The primary structure comprises 218 residues: Adenylate kinase (218 aa).

10–15 (GAGKGT) is a binding site for ATP. The interval 30–59 (STGDMLRAAIAKGTPLGLSAQKIMESGGLV) is NMP. AMP-binding positions include threonine 31, arginine 36, 57 to 59 (GLV), 85 to 88 (GFPR), and glutamine 92. Residues 122–159 (GRRIHQPSGRVYHVVNQPPKNPGVDDITGEPLIQRDDD) are LID. ATP is bound by residues arginine 123 and 132–133 (VY). AMP-binding residues include arginine 156 and arginine 167. ATP is bound at residue glycine 203.

The protein belongs to the adenylate kinase family. In terms of assembly, monomer.

It is found in the cytoplasm. The enzyme catalyses AMP + ATP = 2 ADP. Its pathway is purine metabolism; AMP biosynthesis via salvage pathway; AMP from ADP: step 1/1. Functionally, catalyzes the reversible transfer of the terminal phosphate group between ATP and AMP. Plays an important role in cellular energy homeostasis and in adenine nucleotide metabolism. In Legionella pneumophila (strain Corby), this protein is Adenylate kinase.